Consider the following 382-residue polypeptide: uncharacterized protein (382 aa).

This is an uncharacterized protein from Methanocaldococcus jannaschii (strain ATCC 43067 / DSM 2661 / JAL-1 / JCM 10045 / NBRC 100440) (Methanococcus jannaschii).